Here is a 167-residue protein sequence, read N- to C-terminus: N5-carboxyaminoimidazole ribonucleotide mutase (167 aa).

3 residues coordinate substrate: Ser11, Asp14, and Arg41.

Belongs to the AIR carboxylase family. Class I subfamily.

It catalyses the reaction 5-carboxyamino-1-(5-phospho-D-ribosyl)imidazole + H(+) = 5-amino-1-(5-phospho-D-ribosyl)imidazole-4-carboxylate. It functions in the pathway purine metabolism; IMP biosynthesis via de novo pathway; 5-amino-1-(5-phospho-D-ribosyl)imidazole-4-carboxylate from 5-amino-1-(5-phospho-D-ribosyl)imidazole (N5-CAIR route): step 2/2. Its function is as follows. Catalyzes the conversion of N5-carboxyaminoimidazole ribonucleotide (N5-CAIR) to 4-carboxy-5-aminoimidazole ribonucleotide (CAIR). The chain is N5-carboxyaminoimidazole ribonucleotide mutase from Aquifex aeolicus (strain VF5).